The sequence spans 682 residues: L-type lectin-domain containing receptor kinase VI.2 (682 aa).

Residues 1 to 26 form the signal peptide; it reads MGTQRSMFIVSFLFKLFLFLSVHVRA. At 27 to 310 the chain is on the extracellular side; that stretch reads QRTTTNFAFR…AKKEGLNSQV (284 aa). Positions 29-277 are legume-lectin like; sequence TTTNFAFRGF…AHYVMGWSFS (249 aa). The chain crosses the membrane as a helical span at residues 311 to 331; it reads IVMIVALSAVMLVMLVLLFFF. Residues 332–682 lie on the Cytoplasmic side of the membrane; sequence VMYKKRLGQE…RVSSTSRISQ (351 aa). The Protein kinase domain maps to 367–641; the sequence is FKKTGIIGTG…LRYLNGEENV (275 aa). ATP is bound by residues 373–381 and Lys-395; that span reads IGTGGFGTV. Catalysis depends on Asp-494, which acts as the Proton acceptor.

It in the C-terminal section; belongs to the protein kinase superfamily. Ser/Thr protein kinase family. The protein in the N-terminal section; belongs to the leguminous lectin family. Strongly expressed in the vascular system and trichomes of the leaves. Also expressed in guard cells, anthers, stigmas and germinating seeds, but not found in petals or roots. Increased susceptibility to the bacteria Pseudomonas syringae, characterized by stronger necrotic symptoms and higher bacterial proliferation.

It localises to the cell membrane. The catalysed reaction is L-seryl-[protein] + ATP = O-phospho-L-seryl-[protein] + ADP + H(+). It carries out the reaction L-threonyl-[protein] + ATP = O-phospho-L-threonyl-[protein] + ADP + H(+). Its function is as follows. Involved in negative regulation of abscisic acid response in seed germination. Involved in resistance response to the pathogenic bacteria Pseudomonas syringae. This Arabidopsis thaliana (Mouse-ear cress) protein is L-type lectin-domain containing receptor kinase VI.2.